Here is a 308-residue protein sequence, read N- to C-terminus: Phosphoribosylaminoimidazole-succinocarboxamide synthase (308 aa).

Belongs to the SAICAR synthetase family.

The catalysed reaction is 5-amino-1-(5-phospho-D-ribosyl)imidazole-4-carboxylate + L-aspartate + ATP = (2S)-2-[5-amino-1-(5-phospho-beta-D-ribosyl)imidazole-4-carboxamido]succinate + ADP + phosphate + 2 H(+). It participates in purine metabolism; IMP biosynthesis via de novo pathway; 5-amino-1-(5-phospho-D-ribosyl)imidazole-4-carboxamide from 5-amino-1-(5-phospho-D-ribosyl)imidazole-4-carboxylate: step 1/2. This is Phosphoribosylaminoimidazole-succinocarboxamide synthase from Xanthomonas oryzae pv. oryzae (strain PXO99A).